The chain runs to 440 residues: MRRPLDPRDIPDELRRRLGLLDAVVIGLGSMIGAGIFAALAPAAYAAGSGLLLGLAVAAVVAYCNAISSARLAARYPASGGTYVYGRMRLGDFWGYLAGWGFVVGKTASCAAMALTVGFYVWPAQAHAVAVAVVVALTAVNYAGIQKSAWLTRSIVAVVLVVLTAVVVAAYGSGAADPARLDIGVDAHVWGMLQAAGLLFFAFAGYARIATLGEEVRDPARTIPRAIPLALGITLAVYALVAVAVIAVLGPQRLARAAAPLSEAMRVAGVNWLIPVVQIGAAVAALGSLLALILGVSRTTLAMARDRHLPRWLAAVHPRFKVPFRAELVVGAVVAALAATADIRGAIGFSSFGVLVYYAIANASALTLGLDEGRPRRLIPLVGLIGCVVLAFALPLSSVAAGAAVLGVGVAAYGVRRIITRRARQTDSGDTQRSGHPSAT.

12 consecutive transmembrane segments (helical) span residues 24–44 (VVIG…APAA), 47–67 (AGSG…CNAI), 93–113 (FWGY…CAAM), 117–137 (VGFY…VVAL), 155–175 (IVAV…GSGA), 183–203 (IGVD…FFAF), 229–249 (LALG…IAVL), 276–296 (VVQI…ILGV), 323–343 (PFRA…TADI), 346–366 (AIGF…ASAL), 379–399 (IPLV…LSSV), and 400–420 (AAGA…RIIT).

Belongs to the amino acid-polyamine-organocation (APC) superfamily.

The protein localises to the cell membrane. In terms of biological role, probable amino-acid or metabolite transport protein. This is an uncharacterized protein from Mycobacterium bovis (strain ATCC BAA-935 / AF2122/97).